The sequence spans 170 residues: Crossover junction endodeoxyribonuclease RuvC (170 aa).

Catalysis depends on residues Asp-11, Glu-71, and Asp-143. Mg(2+)-binding residues include Asp-11, Glu-71, and Asp-143.

This sequence belongs to the RuvC family. As to quaternary structure, homodimer which binds Holliday junction (HJ) DNA. The HJ becomes 2-fold symmetrical on binding to RuvC with unstacked arms; it has a different conformation from HJ DNA in complex with RuvA. In the full resolvosome a probable DNA-RuvA(4)-RuvB(12)-RuvC(2) complex forms which resolves the HJ. It depends on Mg(2+) as a cofactor.

The protein localises to the cytoplasm. The catalysed reaction is Endonucleolytic cleavage at a junction such as a reciprocal single-stranded crossover between two homologous DNA duplexes (Holliday junction).. Its function is as follows. The RuvA-RuvB-RuvC complex processes Holliday junction (HJ) DNA during genetic recombination and DNA repair. Endonuclease that resolves HJ intermediates. Cleaves cruciform DNA by making single-stranded nicks across the HJ at symmetrical positions within the homologous arms, yielding a 5'-phosphate and a 3'-hydroxyl group; requires a central core of homology in the junction. The consensus cleavage sequence is 5'-(A/T)TT(C/G)-3'. Cleavage occurs on the 3'-side of the TT dinucleotide at the point of strand exchange. HJ branch migration catalyzed by RuvA-RuvB allows RuvC to scan DNA until it finds its consensus sequence, where it cleaves and resolves the cruciform DNA. In Agrobacterium fabrum (strain C58 / ATCC 33970) (Agrobacterium tumefaciens (strain C58)), this protein is Crossover junction endodeoxyribonuclease RuvC.